The chain runs to 410 residues: MAMSNLPRDLLEEVLSRVPVKSIAAVRSTCKNWNSLTYGQSFTKKLYGKTMATKEKEFLVVMTMDLEVYLMRVNLHGIHKDDNNVKSSIMQKAKLIRLNDDRVRVDDICKVFHCDGLLLCITIGIRLVVCNPYCGQTRCIKTRRDYHITDNYALGHEKMKNSPLRNYKILVFHDKSFLQNSWFEIYNFNSDSWKVLYFTCDWKLPFSQLVVSLKGNTYWFAREMYIHGPRIDLPDFLICFDFTTERFGPRLHLPFHSRCVDTVTLASVREEQLAVLFQDSKTLILEVWITTKIEPNAVSWSSKVFLEVNMSPLTGFQFNRSFGSFFIVEEKNVVVVPIKGGHFKRNLAYIIGKDEYFKEVDLGVPSSYIYFSPHVCSYVPSLVQIKKDAQVMLQHHNVSAEKHHEFCASL.

An F-box domain is found at 1–46; it reads MAMSNLPRDLLEEVLSRVPVKSIAAVRSTCKNWNSLTYGQSFTKKL.

The polypeptide is F-box protein At5g36730 (Arabidopsis thaliana (Mouse-ear cress)).